The sequence spans 98 residues: MSADPRHYDIVVSPVITEKATNLTEQNKVVFRVAPKATKPQIKEAVEKLFDVKVTAVNTLVTKGKKKIFRGLRGQRSDVKKAIVTLAEGHTIDVTTGL.

The protein belongs to the universal ribosomal protein uL23 family. In terms of assembly, part of the 50S ribosomal subunit. Contacts protein L29, and trigger factor when it is bound to the ribosome.

Functionally, one of the early assembly proteins it binds 23S rRNA. One of the proteins that surrounds the polypeptide exit tunnel on the outside of the ribosome. Forms the main docking site for trigger factor binding to the ribosome. The polypeptide is Large ribosomal subunit protein uL23 (Methylobacterium radiotolerans (strain ATCC 27329 / DSM 1819 / JCM 2831 / NBRC 15690 / NCIMB 10815 / 0-1)).